The following is a 453-amino-acid chain: Adenosylmethionine-8-amino-7-oxononanoate aminotransferase (453 aa).

118–119 lines the pyridoxal 5'-phosphate pocket; that stretch reads GA. Position 151 (Tyr151) interacts with substrate. Asp257 serves as a coordination point for pyridoxal 5'-phosphate. Lys286, Gly321, and Arg416 together coordinate substrate. Lys286 is modified (N6-(pyridoxal phosphate)lysine).

This sequence belongs to the class-III pyridoxal-phosphate-dependent aminotransferase family. BioA subfamily. Homodimer. Pyridoxal 5'-phosphate is required as a cofactor.

The protein localises to the cytoplasm. The enzyme catalyses (8S)-8-amino-7-oxononanoate + S-adenosyl-L-methionine = S-adenosyl-4-methylsulfanyl-2-oxobutanoate + (7R,8S)-7,8-diammoniononanoate. It functions in the pathway cofactor biosynthesis; biotin biosynthesis; 7,8-diaminononanoate from 8-amino-7-oxononanoate (SAM route): step 1/1. Catalyzes the transfer of the alpha-amino group from S-adenosyl-L-methionine (SAM) to 7-keto-8-aminopelargonic acid (KAPA) to form 7,8-diaminopelargonic acid (DAPA). It is the only aminotransferase known to utilize SAM as an amino donor. The sequence is that of Adenosylmethionine-8-amino-7-oxononanoate aminotransferase from Aquifex aeolicus (strain VF5).